A 341-amino-acid polypeptide reads, in one-letter code: Anthranilate phosphoribosyltransferase (341 aa).

Residues Gly79, Gly82 to Asp83, Thr87, Asn89 to Thr92, Lys107 to Ser115, and Ser119 each bind 5-phospho-alpha-D-ribose 1-diphosphate. Gly79 lines the anthranilate pocket. Mg(2+) is bound at residue Ser91. Position 110 (Asn110) interacts with anthranilate. Arg165 contributes to the anthranilate binding site. Positions 224 and 225 each coordinate Mg(2+).

Belongs to the anthranilate phosphoribosyltransferase family. In terms of assembly, homodimer. Requires Mg(2+) as cofactor.

The catalysed reaction is N-(5-phospho-beta-D-ribosyl)anthranilate + diphosphate = 5-phospho-alpha-D-ribose 1-diphosphate + anthranilate. The protein operates within amino-acid biosynthesis; L-tryptophan biosynthesis; L-tryptophan from chorismate: step 2/5. Catalyzes the transfer of the phosphoribosyl group of 5-phosphorylribose-1-pyrophosphate (PRPP) to anthranilate to yield N-(5'-phosphoribosyl)-anthranilate (PRA). The sequence is that of Anthranilate phosphoribosyltransferase from Bacillus cereus (strain ATCC 14579 / DSM 31 / CCUG 7414 / JCM 2152 / NBRC 15305 / NCIMB 9373 / NCTC 2599 / NRRL B-3711).